A 398-amino-acid chain; its full sequence is Probable aminomethyltransferase (398 aa).

Belongs to the GcvT family. As to quaternary structure, the glycine cleavage system is composed of four proteins: P, T, L and H.

The catalysed reaction is N(6)-[(R)-S(8)-aminomethyldihydrolipoyl]-L-lysyl-[protein] + (6S)-5,6,7,8-tetrahydrofolate = N(6)-[(R)-dihydrolipoyl]-L-lysyl-[protein] + (6R)-5,10-methylene-5,6,7,8-tetrahydrofolate + NH4(+). Its function is as follows. The glycine cleavage system catalyzes the degradation of glycine. The chain is Probable aminomethyltransferase from Pyrococcus abyssi (strain GE5 / Orsay).